Here is a 179-residue protein sequence, read N- to C-terminus: Large ribosomal subunit protein uL5 (179 aa).

The protein belongs to the universal ribosomal protein uL5 family. Part of the 50S ribosomal subunit; part of the 5S rRNA/L5/L18/L25 subcomplex. Contacts the 5S rRNA and the P site tRNA. Forms a bridge to the 30S subunit in the 70S ribosome.

Its function is as follows. This is one of the proteins that bind and probably mediate the attachment of the 5S RNA into the large ribosomal subunit, where it forms part of the central protuberance. In the 70S ribosome it contacts protein S13 of the 30S subunit (bridge B1b), connecting the 2 subunits; this bridge is implicated in subunit movement. Contacts the P site tRNA; the 5S rRNA and some of its associated proteins might help stabilize positioning of ribosome-bound tRNAs. The polypeptide is Large ribosomal subunit protein uL5 (Pseudomonas savastanoi pv. phaseolicola (strain 1448A / Race 6) (Pseudomonas syringae pv. phaseolicola (strain 1448A / Race 6))).